The sequence spans 475 residues: MSPQTETKASVGFKAGVKDYRLTYYTPEYETLDTDILAAFRVTPQPGVPPEEAGAAVAAESSTGTWTSVWTDGLTSLDRYKGRCYNIEPVAGEENQYICYVAYPLDLFEEGSVTNMFTSIVGNVFGFKALRALRLEDLRIPVAYVKTFQGPPHGIQVERDKLNKYGRPLLGCTIKPKLGLSAKNYGRACYECLRGGLDFTKDDENVNSQPFMRWRDRFLFCAEAIYKSQAETGEIKGHYLNATAGTCEEMIKRAVFARELGVPIVMHDYLTGGFTANTSLSQYCRDNGLLLHIHRAMHAVIDRQKNHGMHFRVLAKALRLSGGDHIHSGTVVGKLEGERDITLGFVDLLRDDYTEKDRSRGIFFTQSWVSTPGVLPVASGGIHVWHMPALTEIFGDDSVLQFGGGTLGHPWGNAPGAVANRVALEACVQARNEGRDLAREGNTIIREAAKWSPELAAACEVWKEIKFEFPAMDTI.

A propeptide spanning residues 1-2 is cleaved from the precursor; that stretch reads MS. At Pro3 the chain carries N-acetylproline. Lys14 is subject to N6,N6,N6-trimethyllysine. Asn123 and Thr173 together coordinate substrate. Catalysis depends on Lys175, which acts as the Proton acceptor. Substrate is bound at residue Lys177. Lys201, Asp203, and Glu204 together coordinate Mg(2+). At Lys201 the chain carries N6-carboxylysine. His294 functions as the Proton acceptor in the catalytic mechanism. Positions 295, 327, and 379 each coordinate substrate.

It belongs to the RuBisCO large chain family. Type I subfamily. Heterohexadecamer of 8 large chains and 8 small chains; disulfide-linked. The disulfide link is formed within the large subunit homodimers. Mg(2+) serves as cofactor. In terms of processing, the disulfide bond which can form in the large chain dimeric partners within the hexadecamer appears to be associated with oxidative stress and protein turnover.

The protein resides in the plastid. Its subcellular location is the chloroplast. The catalysed reaction is 2 (2R)-3-phosphoglycerate + 2 H(+) = D-ribulose 1,5-bisphosphate + CO2 + H2O. It carries out the reaction D-ribulose 1,5-bisphosphate + O2 = 2-phosphoglycolate + (2R)-3-phosphoglycerate + 2 H(+). Functionally, ruBisCO catalyzes two reactions: the carboxylation of D-ribulose 1,5-bisphosphate, the primary event in carbon dioxide fixation, as well as the oxidative fragmentation of the pentose substrate in the photorespiration process. Both reactions occur simultaneously and in competition at the same active site. This is Ribulose bisphosphate carboxylase large chain from Amaranthus tricolor (Joseph's coat).